The primary structure comprises 103 residues: Small ribosomal subunit protein uS10 (103 aa).

This sequence belongs to the universal ribosomal protein uS10 family. As to quaternary structure, part of the 30S ribosomal subunit.

In terms of biological role, involved in the binding of tRNA to the ribosomes. The chain is Small ribosomal subunit protein uS10 from Polynucleobacter asymbioticus (strain DSM 18221 / CIP 109841 / QLW-P1DMWA-1) (Polynucleobacter necessarius subsp. asymbioticus).